A 301-amino-acid polypeptide reads, in one-letter code: tRNA pseudouridine synthase B (301 aa).

Residue Asp47 is the Nucleophile of the active site.

This sequence belongs to the pseudouridine synthase TruB family. Type 1 subfamily.

It catalyses the reaction uridine(55) in tRNA = pseudouridine(55) in tRNA. Functionally, responsible for synthesis of pseudouridine from uracil-55 in the psi GC loop of transfer RNAs. The sequence is that of tRNA pseudouridine synthase B from Cereibacter sphaeroides (strain ATCC 17023 / DSM 158 / JCM 6121 / CCUG 31486 / LMG 2827 / NBRC 12203 / NCIMB 8253 / ATH 2.4.1.) (Rhodobacter sphaeroides).